The primary structure comprises 251 residues: 5'-nucleotidase SurE (251 aa).

Positions 8, 9, 39, and 91 each coordinate a divalent metal cation.

This sequence belongs to the SurE nucleotidase family. Requires a divalent metal cation as cofactor.

Its subcellular location is the cytoplasm. It carries out the reaction a ribonucleoside 5'-phosphate + H2O = a ribonucleoside + phosphate. Its function is as follows. Nucleotidase that shows phosphatase activity on nucleoside 5'-monophosphates. The polypeptide is 5'-nucleotidase SurE (Halorhodospira halophila (strain DSM 244 / SL1) (Ectothiorhodospira halophila (strain DSM 244 / SL1))).